A 186-amino-acid chain; its full sequence is MKRKKQDRQRHLKETIDANPFITDEALADRFGVSIQTIRLDRMELSIPELRERIKDVAQKQLDEVKALPMEEVFGEIVDLQLDERAISILDVKKEHVFSRTGIARGHYLFAQANSLAVAIIDDDLALTAKATIRFTRQVKAGERVVAKAEVQKVERDRTLVVVNSFVEQELVFSGDFLMYRSAQEQ.

Belongs to the FapR family.

Functionally, transcriptional factor involved in regulation of membrane lipid biosynthesis by repressing genes involved in fatty acid and phospholipid metabolism. The polypeptide is Transcription factor FapR (Halalkalibacterium halodurans (strain ATCC BAA-125 / DSM 18197 / FERM 7344 / JCM 9153 / C-125) (Bacillus halodurans)).